The following is a 645-amino-acid chain: Threonine--tRNA ligase (645 aa).

In terms of domain architecture, TGS spans 1–63 (MEQINIQFPD…ETDGSIEIVT (63 aa)). Residues 242 to 540 (DHRKIGKELE…LTEETKGAFP (299 aa)) are catalytic. C336, H387, and H517 together coordinate Zn(2+).

Belongs to the class-II aminoacyl-tRNA synthetase family. Homodimer. Requires Zn(2+) as cofactor.

Its subcellular location is the cytoplasm. The enzyme catalyses tRNA(Thr) + L-threonine + ATP = L-threonyl-tRNA(Thr) + AMP + diphosphate + H(+). Catalyzes the attachment of threonine to tRNA(Thr) in a two-step reaction: L-threonine is first activated by ATP to form Thr-AMP and then transferred to the acceptor end of tRNA(Thr). Also edits incorrectly charged L-seryl-tRNA(Thr). In Staphylococcus aureus (strain bovine RF122 / ET3-1), this protein is Threonine--tRNA ligase.